Here is a 112-residue protein sequence, read N- to C-terminus: T cell receptor alpha variable 9-2 (112 aa).

The N-terminal stretch at 1-20 is a signal peptide; the sequence is MNYSPGLVSLILLLLGRTRG. An Ig-like domain is found at 21–112; the sequence is DSVTQMEGPV…DSAVYFCALS (92 aa). N-linked (GlcNAc...) asparagine glycosylation is present at asparagine 41. Cysteine 42 and cysteine 109 are disulfide-bonded.

In terms of assembly, alpha-beta TR is a heterodimer composed of an alpha and beta chain; disulfide-linked. The alpha-beta TR is associated with the transmembrane signaling CD3 coreceptor proteins to form the TR-CD3 (TcR or TCR). The assembly of alpha-beta TR heterodimers with CD3 occurs in the endoplasmic reticulum where a single alpha-beta TR heterodimer associates with one CD3D-CD3E heterodimer, one CD3G-CD3E heterodimer and one CD247 homodimer forming a stable octameric structure. CD3D-CD3E and CD3G-CD3E heterodimers preferentially associate with TR alpha and TR beta chains, respectively. The association of the CD247 homodimer is the last step of TcR assembly in the endoplasmic reticulum and is required for transport to the cell surface.

It is found in the cell membrane. In terms of biological role, v region of the variable domain of T cell receptor (TR) alpha chain that participates in the antigen recognition. Alpha-beta T cell receptors are antigen specific receptors which are essential to the immune response and are present on the cell surface of T lymphocytes. Recognize peptide-major histocompatibility (MH) (pMH) complexes that are displayed by antigen presenting cells (APC), a prerequisite for efficient T cell adaptive immunity against pathogens. Binding of alpha-beta TR to pMH complex initiates TR-CD3 clustering on the cell surface and intracellular activation of LCK that phosphorylates the ITAM motifs of CD3G, CD3D, CD3E and CD247 enabling the recruitment of ZAP70. In turn ZAP70 phosphorylates LAT, which recruits numerous signaling molecules to form the LAT signalosome. The LAT signalosome propagates signal branching to three major signaling pathways, the calcium, the mitogen-activated protein kinase (MAPK) kinase and the nuclear factor NF-kappa-B (NF-kB) pathways, leading to the mobilization of transcription factors that are critical for gene expression and essential for T cell growth and differentiation. The T cell repertoire is generated in the thymus, by V-(D)-J rearrangement. This repertoire is then shaped by intrathymic selection events to generate a peripheral T cell pool of self-MH restricted, non-autoaggressive T cells. Post-thymic interaction of alpha-beta TR with the pMH complexes shapes TR structural and functional avidity. The chain is T cell receptor alpha variable 9-2 from Homo sapiens (Human).